A 150-amino-acid chain; its full sequence is Cell division protein SepF (150 aa).

The protein belongs to the SepF family. In terms of assembly, homodimer. Interacts with FtsZ.

The protein localises to the cytoplasm. Functionally, cell division protein that is part of the divisome complex and is recruited early to the Z-ring. Probably stimulates Z-ring formation, perhaps through the cross-linking of FtsZ protofilaments. Its function overlaps with FtsA. In Clostridium kluyveri (strain NBRC 12016), this protein is Cell division protein SepF.